The following is a 415-amino-acid chain: Chorismate synthase (415 aa).

The interval Glu-43–Gln-72 is disordered. An NADP(+)-binding site is contributed by Arg-48. Residues Arg-125–Ser-127, Gly-304, His-319–Ser-323, and Arg-346 contribute to the FMN site. The tract at residues Thr-262–Asp-310 is disordered. A compositionally biased stretch (gly residues) spans Asp-298–Thr-307. Basic and acidic residues predominate over residues Pro-379 to Tyr-393. Positions Pro-379–Asp-415 are disordered.

The protein belongs to the chorismate synthase family. FMNH2 serves as cofactor.

The enzyme catalyses 5-O-(1-carboxyvinyl)-3-phosphoshikimate = chorismate + phosphate. The protein operates within metabolic intermediate biosynthesis; chorismate biosynthesis; chorismate from D-erythrose 4-phosphate and phosphoenolpyruvate: step 7/7. In terms of biological role, catalyzes the anti-1,4-elimination of the C-3 phosphate and the C-6 proR hydrogen from 5-enolpyruvylshikimate-3-phosphate (EPSP) to yield chorismate, which is the branch point compound that serves as the starting substrate for the three terminal pathways of aromatic amino acid biosynthesis. This reaction introduces a second double bond into the aromatic ring system. The protein is Chorismate synthase of Halomicrobium mukohataei (strain ATCC 700874 / DSM 12286 / JCM 9738 / NCIMB 13541) (Haloarcula mukohataei).